Reading from the N-terminus, the 268-residue chain is Interleukin-1 beta (268 aa).

The propeptide occupies 1 to 115; it reads MAAVPDTSDM…DNWDEGYVCD (115 aa).

Belongs to the IL-1 family. Monomer. In its precursor form, weakly interacts with full-length MEFV; the mature cytokine does not interact at all. Interacts with integrins ITGAV:ITGBV and ITGA5:ITGB1; integrin-binding is required for IL1B signaling. Interacts with cargo receptor TMED10; the interaction is direct and is required for the secretion of IL1B mature form. Interacts with HSP90AB1; the interaction facilitates cargo translocation into the ERGIC. Interacts with HSP90B1; the interaction facilitates cargo translocation into the ERGIC.

The protein localises to the cytoplasm. The protein resides in the cytosol. Its subcellular location is the secreted. It localises to the lysosome. It is found in the extracellular exosome. Functionally, potent pro-inflammatory cytokine. Initially discovered as the major endogenous pyrogen, induces prostaglandin synthesis, neutrophil influx and activation, T-cell activation and cytokine production, B-cell activation and antibody production, and fibroblast proliferation and collagen production. Promotes Th17 differentiation of T-cells. Synergizes with IL12/interleukin-12 to induce IFNG synthesis from T-helper 1 (Th1) cells. Plays a role in angiogenesis by inducing VEGF production synergistically with TNF and IL6. Involved in transduction of inflammation downstream of pyroptosis: its mature form is specifically released in the extracellular milieu by passing through the gasdermin-D (GSDMD) pore. The protein is Interleukin-1 beta (IL1B) of Equus caballus (Horse).